The chain runs to 702 residues: Elongation factor G (702 aa).

One can recognise a tr-type G domain in the interval 8 to 290 (ARYRNIGISA…AVIEYLPAPT (283 aa)). GTP is bound by residues 17–24 (AHIDAGKT), 88–92 (DTPGH), and 142–145 (NKMD).

It belongs to the TRAFAC class translation factor GTPase superfamily. Classic translation factor GTPase family. EF-G/EF-2 subfamily.

The protein localises to the cytoplasm. In terms of biological role, catalyzes the GTP-dependent ribosomal translocation step during translation elongation. During this step, the ribosome changes from the pre-translocational (PRE) to the post-translocational (POST) state as the newly formed A-site-bound peptidyl-tRNA and P-site-bound deacylated tRNA move to the P and E sites, respectively. Catalyzes the coordinated movement of the two tRNA molecules, the mRNA and conformational changes in the ribosome. This chain is Elongation factor G, found in Photorhabdus laumondii subsp. laumondii (strain DSM 15139 / CIP 105565 / TT01) (Photorhabdus luminescens subsp. laumondii).